We begin with the raw amino-acid sequence, 323 residues long: Cysteine synthase A (323 aa).

Asn8 and Arg35 together coordinate hydrogen sulfide. Lys42 is modified (N6-(pyridoxal phosphate)lysine). Residues Asn72 and 177–181 (GTGGT) contribute to the pyridoxal 5'-phosphate site. Hydrogen sulfide is bound at residue Leu269. Position 273 (Ser273) interacts with pyridoxal 5'-phosphate.

Belongs to the cysteine synthase/cystathionine beta-synthase family. In terms of assembly, homodimer. Pyridoxal 5'-phosphate is required as a cofactor.

It catalyses the reaction O-acetyl-L-serine + hydrogen sulfide = L-cysteine + acetate. It functions in the pathway amino-acid biosynthesis; L-cysteine biosynthesis; L-cysteine from L-serine: step 2/2. In Escherichia coli O157:H7, this protein is Cysteine synthase A (cysK).